A 276-amino-acid polypeptide reads, in one-letter code: NAD kinase (276 aa).

Asp67 (proton acceptor) is an active-site residue. NAD(+) contacts are provided by residues 67-68 (DG), Arg72, 136-137 (ND), Lys147, Arg164, Asp166, 177-182 (TAYALS), Ala201, and Gln235.

This sequence belongs to the NAD kinase family. A divalent metal cation is required as a cofactor.

It localises to the cytoplasm. The enzyme catalyses NAD(+) + ATP = ADP + NADP(+) + H(+). Functionally, involved in the regulation of the intracellular balance of NAD and NADP, and is a key enzyme in the biosynthesis of NADP. Catalyzes specifically the phosphorylation on 2'-hydroxyl of the adenosine moiety of NAD to yield NADP. The chain is NAD kinase from Thermococcus sibiricus (strain DSM 12597 / MM 739).